The sequence spans 46 residues: Endochitinase 1A (46 aa).

It belongs to the glycosyl hydrolase 19 family. Chitinase class I subfamily.

The catalysed reaction is Random endo-hydrolysis of N-acetyl-beta-D-glucosaminide (1-&gt;4)-beta-linkages in chitin and chitodextrins.. Functionally, defense against chitin-containing fungal and bacterial pathogens. This chain is Endochitinase 1A, found in Arachis hypogaea (Peanut).